The following is a 113-amino-acid chain: P antigen family member 3 (113 aa).

Over residues 1–12 (MSGHQRTRSRSR) the composition is skewed to basic residues. 2 disordered regions span residues 1-61 (MSGH…EGAL) and 78-113 (SKTG…QPSV).

Belongs to the GAGE family.

This chain is P antigen family member 3 (PAGE3), found in Homo sapiens (Human).